The primary structure comprises 311 residues: Giardin subunit gamma (311 aa).

A coiled-coil region spans residues 185–233 (GLQTEINSLEAIIEREFAQAANRLNQEVSNFKESFDASERNIKLQKKHV).

As to quaternary structure, interacts with EB1.

The protein resides in the cytoplasm. It localises to the cytoskeleton. Its function is as follows. Giardins are involved in parasite attachment to the intestinal mucosa and in the cytoskeletal disassembly and reassembly that marks the transition from infectious trophozoite to transmissible cyst. They may interact with other cytoskeletal proteins such as microtubules in the microribbons or crossbridges, to maintain the integrity of the ventral disk. Involved in formation of the ventral disk. The chain is Giardin subunit gamma from Giardia intestinalis (Giardia lamblia).